Reading from the N-terminus, the 96-residue chain is Co-chaperonin GroES (96 aa).

It belongs to the GroES chaperonin family. In terms of assembly, heptamer of 7 subunits arranged in a ring. Interacts with the chaperonin GroEL.

The protein localises to the cytoplasm. Together with the chaperonin GroEL, plays an essential role in assisting protein folding. The GroEL-GroES system forms a nano-cage that allows encapsulation of the non-native substrate proteins and provides a physical environment optimized to promote and accelerate protein folding. GroES binds to the apical surface of the GroEL ring, thereby capping the opening of the GroEL channel. This chain is Co-chaperonin GroES, found in Caulobacter vibrioides (strain ATCC 19089 / CIP 103742 / CB 15) (Caulobacter crescentus).